The primary structure comprises 323 residues: Methenyltetrahydromethanopterin cyclohydrolase (323 aa).

The protein belongs to the MCH family.

It is found in the cytoplasm. It catalyses the reaction 5,10-methenyl-5,6,7,8-tetrahydromethanopterin + H2O = N(5)-formyl-5,6,7,8-tetrahydromethanopterin + H(+). Its pathway is one-carbon metabolism; methanogenesis from CO(2); 5,10-methenyl-5,6,7,8-tetrahydromethanopterin from CO(2): step 3/3. Its function is as follows. Catalyzes the reversible interconversion of 5-formyl-H(4)MPT to methenyl-H(4)MPT(+). The chain is Methenyltetrahydromethanopterin cyclohydrolase from Methanococcus maripaludis (strain C5 / ATCC BAA-1333).